Reading from the N-terminus, the 187-residue chain is Ribosome hibernation promotion factor (187 aa).

The protein belongs to the HPF/YfiA ribosome-associated protein family. Long HPF subfamily. In terms of assembly, interacts with 100S ribosomes.

It localises to the cytoplasm. In terms of biological role, involved in 100S ribosome formation from 70S ribosomes; 100S ribosomes are probably translationally inactive. Ribosome hibernation may be used by the cell to decrease overall energy consumption under nutrient-limiting conditions. Unlike E.coli, 100S ribosomes are present from mid-exponential growth, peak during the transition from log to stationary phase and then decrease. This is Ribosome hibernation promotion factor from Listeria monocytogenes serotype 1/2a (strain 10403S).